The sequence spans 453 residues: Bifunctional protein GlmU (453 aa).

A pyrophosphorylase region spans residues 1–227; sequence MTQDIVILAA…EAEVAGVNDR (227 aa). Residues 8 to 11, lysine 22, glutamine 73, 78 to 79, 100 to 102, glycine 137, glutamate 152, asparagine 167, and asparagine 225 contribute to the UDP-N-acetyl-alpha-D-glucosamine site; these read LAAG, GT, and YGD. A Mg(2+)-binding site is contributed by aspartate 102. Asparagine 225 lines the Mg(2+) pocket. The linker stretch occupies residues 228–248; it reads VQLAALERELQNQQAVSLMQN. Residues 249-453 form an N-acetyltransferase region; it reads GATLLDPSRI…KDNWPRPIKK (205 aa). 2 residues coordinate UDP-N-acetyl-alpha-D-glucosamine: arginine 331 and lysine 349. The active-site Proton acceptor is the histidine 361. Tyrosine 364 and asparagine 375 together coordinate UDP-N-acetyl-alpha-D-glucosamine. Acetyl-CoA contacts are provided by residues alanine 378, 384–385, serine 403, alanine 421, and arginine 438; that span reads NY.

It in the N-terminal section; belongs to the N-acetylglucosamine-1-phosphate uridyltransferase family. This sequence in the C-terminal section; belongs to the transferase hexapeptide repeat family. Homotrimer. The cofactor is Mg(2+).

Its subcellular location is the cytoplasm. The enzyme catalyses alpha-D-glucosamine 1-phosphate + acetyl-CoA = N-acetyl-alpha-D-glucosamine 1-phosphate + CoA + H(+). It catalyses the reaction N-acetyl-alpha-D-glucosamine 1-phosphate + UTP + H(+) = UDP-N-acetyl-alpha-D-glucosamine + diphosphate. Its pathway is nucleotide-sugar biosynthesis; UDP-N-acetyl-alpha-D-glucosamine biosynthesis; N-acetyl-alpha-D-glucosamine 1-phosphate from alpha-D-glucosamine 6-phosphate (route II): step 2/2. The protein operates within nucleotide-sugar biosynthesis; UDP-N-acetyl-alpha-D-glucosamine biosynthesis; UDP-N-acetyl-alpha-D-glucosamine from N-acetyl-alpha-D-glucosamine 1-phosphate: step 1/1. It participates in bacterial outer membrane biogenesis; LPS lipid A biosynthesis. Catalyzes the last two sequential reactions in the de novo biosynthetic pathway for UDP-N-acetylglucosamine (UDP-GlcNAc). The C-terminal domain catalyzes the transfer of acetyl group from acetyl coenzyme A to glucosamine-1-phosphate (GlcN-1-P) to produce N-acetylglucosamine-1-phosphate (GlcNAc-1-P), which is converted into UDP-GlcNAc by the transfer of uridine 5-monophosphate (from uridine 5-triphosphate), a reaction catalyzed by the N-terminal domain. This chain is Bifunctional protein GlmU, found in Marinomonas sp. (strain MWYL1).